The following is a 485-amino-acid chain: Glutamate--tRNA ligase 1 (485 aa).

The 'HIGH' region signature appears at 9–19 (PSPTGHLHIGG). The 'KMSKS' region signature appears at 250 to 254 (KMSKR). Lys-253 serves as a coordination point for ATP.

Belongs to the class-I aminoacyl-tRNA synthetase family. Glutamate--tRNA ligase type 1 subfamily. Monomer.

The protein resides in the cytoplasm. The enzyme catalyses tRNA(Glu) + L-glutamate + ATP = L-glutamyl-tRNA(Glu) + AMP + diphosphate. Functionally, catalyzes the attachment of glutamate to tRNA(Glu) in a two-step reaction: glutamate is first activated by ATP to form Glu-AMP and then transferred to the acceptor end of tRNA(Glu). The protein is Glutamate--tRNA ligase 1 of Caldicellulosiruptor saccharolyticus (strain ATCC 43494 / DSM 8903 / Tp8T 6331).